A 429-amino-acid polypeptide reads, in one-letter code: Type II methyltransferase M.AgeI (429 aa).

Residues 1–429 (MKTIDLFCGA…MAETIKVAIS (429 aa)) form the SAM-dependent MTase C5-type domain. The active site involves C80.

It belongs to the class I-like SAM-binding methyltransferase superfamily. C5-methyltransferase family.

The catalysed reaction is a 2'-deoxycytidine in DNA + S-adenosyl-L-methionine = a 5-methyl-2'-deoxycytidine in DNA + S-adenosyl-L-homocysteine + H(+). In terms of biological role, a methylase, recognizes the double-stranded sequence 5'-ACCGGT-3', methylates C-3 on both strands, and protects the DNA from cleavage by the AgeI endonuclease. The chain is Type II methyltransferase M.AgeI (ageIM) from Thalassovita gelatinovora (Thalassobius gelatinovorus).